A 1451-amino-acid polypeptide reads, in one-letter code: Protein clueless (1451 aa).

2 disordered regions span residues 1–101 (MALE…EYAA) and 264–286 (KKTR…VSEP). Positions 9–53 (NSNATATGDATATKASSKAKENNNTAGGKKNLNPIPSQQNSNQNL) are enriched in low complexity. Positions 66–75 (GKKKGKKNRN) are enriched in basic residues. Residue S270 is modified to Phosphoserine. The region spanning 424 to 666 (RAEDAFSSKL…RTFPPDVNFL (243 aa)) is the Clu domain. Disordered regions lie at residues 722–775 (AKKQ…ESKT), 961–1012 (AVSS…SSVS), and 1413–1451 (ANNN…ATSS). Positions 748 to 758 (GADKTDVKEEK) are enriched in basic and acidic residues. Residues 969 to 984 (KKRGNGGKHNKHKSSK) show a composition bias toward basic residues. Positions 989-1010 (QQQQQTTGNQNGSSSGTSNGSS) are enriched in low complexity.

It belongs to the CLU family.

The protein resides in the cytoplasm. MRNA-binding protein involved in proper cytoplasmic distribution of mitochondria. In Drosophila yakuba (Fruit fly), this protein is Protein clueless.